The primary structure comprises 367 residues: Ribosome-binding ATPase YchF (367 aa).

Positions L2 to L258 constitute an OBG-type G domain. N11–T16 is a binding site for ATP. Mg(2+) contacts are provided by S15 and T35. The TGS domain occupies N281–F364.

This sequence belongs to the TRAFAC class OBG-HflX-like GTPase superfamily. OBG GTPase family. YchF/OLA1 subfamily. It depends on Mg(2+) as a cofactor.

Functionally, ATPase that binds to both the 70S ribosome and the 50S ribosomal subunit in a nucleotide-independent manner. The polypeptide is Ribosome-binding ATPase YchF (Mycoplasma genitalium (strain ATCC 33530 / DSM 19775 / NCTC 10195 / G37) (Mycoplasmoides genitalium)).